The primary structure comprises 122 residues: Large ribosomal subunit protein uL14 (122 aa).

The protein belongs to the universal ribosomal protein uL14 family. Part of the 50S ribosomal subunit. Forms a cluster with proteins L3 and L19. In the 70S ribosome, L14 and L19 interact and together make contacts with the 16S rRNA in bridges B5 and B8.

Its function is as follows. Binds to 23S rRNA. Forms part of two intersubunit bridges in the 70S ribosome. In Pelagibacter ubique (strain HTCC1062), this protein is Large ribosomal subunit protein uL14.